The chain runs to 151 residues: MSAATVILILLMLLGILGRSNVIAAAAAFLLLLQFTSLQRFYPILERRALEAGLIFLVVSVLVPFASGRVAPRDMLQSFVSLPGLIAIASGIIATHMNCQGLELLQRFPQMMIGMVIGSIIGVAFFGGIPVGPLMAGGIAALLVHLMAWLR.

Helical transmembrane passes span 6-26, 52-72, 75-95, and 111-131; these read VILI…IAAA, AGLI…RVAP, MLQS…IIAT, and MMIG…GIPV.

Belongs to the UPF0756 family.

Its subcellular location is the cell membrane. The sequence is that of UPF0756 membrane protein Moth_0120 from Moorella thermoacetica (strain ATCC 39073 / JCM 9320).